The following is a 381-amino-acid chain: Class E basic helix-loop-helix protein 22 (381 aa).

Disordered regions lie at residues 30–94, 135–154, and 188–242; these read RLEA…GGGG, RGSV…DSDG, and HLHG…EQKA. Over residues 82-94 the composition is skewed to gly residues; sequence GGGGGSAGSGGGG. The segment covering 198–225 has biased composition (gly residues); the sequence is GGLGGGGGGGSSSGSSGGGGGSGSGSGG. One can recognise a bHLH domain in the interval 242 to 296; sequence ALRLNINARERRRMHDLNDALDELRAVIPYAHSPSVRKLSKIATLLLAKNYILMQ.

Interacts with PRDM8. As to expression, brain-specific, with the highest expression in the cerebellum.

The protein resides in the nucleus. Functionally, inhibits DNA binding of TCF3/E47 homodimers and TCF3 (E47)/NEUROD1 heterodimers and acts as a strong repressor of Neurod1 and Myod-responsive genes, probably by heterodimerization with class a basic helix-loop-helix factors. Despite the presence of an intact basic domain, does not bind to DNA. In the brain, may function as an area-specific transcription factor that regulates the postmitotic acquisition of area identities and elucidate the genetic hierarchy between progenitors and postmitotic neurons driving neocortical arealization. May be required for the survival of a specific population of inhibitory neurons in the superficial laminae of the spinal cord dorsal horn that may regulate pruritis. Seems to play a crucial role in the retinogenesis, in the specification of amacrine and bipolar subtypes. Forms with PRDM8 a transcriptional repressor complex controlling genes involved in neural development and neuronal differentiation. The polypeptide is Class E basic helix-loop-helix protein 22 (BHLHE22) (Homo sapiens (Human)).